The sequence spans 185 residues: UPF0397 protein LGAS_1499 (185 aa).

A run of 5 helical transmembrane segments spans residues 6-26 (GLSV…VILA), 46-66 (FLAL…GFIG), 78-98 (TWWS…LYGM), 118-138 (VQII…DILI), and 147-167 (FLQG…LGTI).

Belongs to the UPF0397 family.

It localises to the cell membrane. This is UPF0397 protein LGAS_1499 from Lactobacillus gasseri (strain ATCC 33323 / DSM 20243 / BCRC 14619 / CIP 102991 / JCM 1131 / KCTC 3163 / NCIMB 11718 / NCTC 13722 / AM63).